Here is a 446-residue protein sequence, read N- to C-terminus: Maltoporin (446 aa).

The N-terminal stretch at 1 to 25 (MMITLRKLPLAVAVAAGVMSAQAMA) is a signal peptide.

Belongs to the porin LamB (TC 1.B.3) family. In terms of assembly, homotrimer formed of three 18-stranded antiparallel beta-barrels, containing three independent channels.

It localises to the cell outer membrane. It catalyses the reaction beta-maltose(in) = beta-maltose(out). Involved in the transport of maltose and maltodextrins. This chain is Maltoporin, found in Escherichia coli O6:K15:H31 (strain 536 / UPEC).